A 147-amino-acid chain; its full sequence is Peptide methionine sulfoxide reductase MsrB (147 aa).

A MsrB domain is found at 25–147 (DEYWREHLTE…NSVSLIFNKK (123 aa)). Positions 64, 67, 113, and 116 each coordinate Zn(2+). C136 functions as the Nucleophile in the catalytic mechanism.

This sequence belongs to the MsrB Met sulfoxide reductase family. Zn(2+) serves as cofactor.

It carries out the reaction L-methionyl-[protein] + [thioredoxin]-disulfide + H2O = L-methionyl-(R)-S-oxide-[protein] + [thioredoxin]-dithiol. The protein is Peptide methionine sulfoxide reductase MsrB of Vibrio cholerae serotype O1 (strain ATCC 39541 / Classical Ogawa 395 / O395).